Reading from the N-terminus, the 455-residue chain is tRNA modification GTPase MnmE (455 aa).

Arg-24, Glu-81, and Lys-120 together coordinate (6S)-5-formyl-5,6,7,8-tetrahydrofolate. A TrmE-type G domain is found at 216–378 (GMTVVIAGRP…LREHLKHCMG (163 aa)). Asn-226 contributes to the K(+) binding site. GTP contacts are provided by residues 226–231 (NAGKSS), 245–251 (TDIAGTT), 270–273 (DTAG), and 335–338 (NKAD). Mg(2+) is bound at residue Ser-230. Residues Thr-245, Ile-247, and Thr-250 each coordinate K(+). Position 251 (Thr-251) interacts with Mg(2+). Lys-455 is a binding site for (6S)-5-formyl-5,6,7,8-tetrahydrofolate.

It belongs to the TRAFAC class TrmE-Era-EngA-EngB-Septin-like GTPase superfamily. TrmE GTPase family. As to quaternary structure, homodimer. Heterotetramer of two MnmE and two MnmG subunits. Requires K(+) as cofactor.

Its subcellular location is the cytoplasm. Functionally, exhibits a very high intrinsic GTPase hydrolysis rate. Involved in the addition of a carboxymethylaminomethyl (cmnm) group at the wobble position (U34) of certain tRNAs, forming tRNA-cmnm(5)s(2)U34. The sequence is that of tRNA modification GTPase MnmE from Stutzerimonas stutzeri (strain A1501) (Pseudomonas stutzeri).